The sequence spans 83 residues: Large ribosomal subunit protein eL14 (83 aa).

The protein belongs to the eukaryotic ribosomal protein eL14 family. As to quaternary structure, part of the 50S ribosomal subunit.

In Thermococcus kodakarensis (strain ATCC BAA-918 / JCM 12380 / KOD1) (Pyrococcus kodakaraensis (strain KOD1)), this protein is Large ribosomal subunit protein eL14.